The chain runs to 325 residues: GMP reductase (325 aa).

Cys-174 acts as the Thioimidate intermediate in catalysis. NADP(+) is bound at residue 203–226; the sequence is IIADGGIRTNGDIAKSIRFGANMV.

Belongs to the IMPDH/GMPR family. GuaC type 2 subfamily.

The catalysed reaction is IMP + NH4(+) + NADP(+) = GMP + NADPH + 2 H(+). Catalyzes the irreversible NADPH-dependent deamination of GMP to IMP. It functions in the conversion of nucleobase, nucleoside and nucleotide derivatives of G to A nucleotides, and in maintaining the intracellular balance of A and G nucleotides. This chain is GMP reductase, found in Latilactobacillus sakei subsp. sakei (strain 23K) (Lactobacillus sakei subsp. sakei).